A 295-amino-acid polypeptide reads, in one-letter code: Sulfotransferase 1A3 (295 aa).

48–53 (KSGTTW) lines the 3'-phosphoadenylyl sulfate pocket. Dopamine-binding positions include aspartate 86 and 106 to 108 (KSH). Histidine 108 functions as the Proton acceptor in the catalytic mechanism. Residues arginine 130 and serine 138 each coordinate 3'-phosphoadenylyl sulfate. Residue glutamate 146 coordinates dopamine. Residues tyrosine 193, 227-232 (TSFKEM), and 257-259 (RKG) each bind 3'-phosphoadenylyl sulfate.

This sequence belongs to the sulfotransferase 1 family. Homodimer. Post-translationally, the N-terminus is blocked. In terms of tissue distribution, liver, colon, kidney, lung, brain, spleen, small intestine, placenta and leukocyte.

It localises to the cytoplasm. It catalyses the reaction a phenol + 3'-phosphoadenylyl sulfate = an aryl sulfate + adenosine 3',5'-bisphosphate + H(+). It carries out the reaction 4-nitrophenol + 3'-phosphoadenylyl sulfate = 4-nitrophenyl sulfate + adenosine 3',5'-bisphosphate. The enzyme catalyses dopamine + 3'-phosphoadenylyl sulfate = dopamine 3-O-sulfate + adenosine 3',5'-bisphosphate + H(+). The catalysed reaction is dopamine + 3'-phosphoadenylyl sulfate = dopamine 4-O-sulfate + adenosine 3',5'-bisphosphate + H(+). It catalyses the reaction serotonin + 3'-phosphoadenylyl sulfate = serotonin O-sulfate + adenosine 3',5'-bisphosphate + H(+). It carries out the reaction (R)-adrenaline + 3'-phosphoadenylyl sulfate = (R)-adrenaline 4'-O-sulfate + adenosine 3',5'-bisphosphate + H(+). The enzyme catalyses (R)-noradrenaline + 3'-phosphoadenylyl sulfate = (R)-noradrenaline 4'-O-sulfate + adenosine 3',5'-bisphosphate + H(+). The catalysed reaction is 3,3',5-triiodo-L-thyronine + 3'-phosphoadenylyl sulfate = 3,3',5-triiodo-L-thyronine sulfate + adenosine 3',5'-bisphosphate + H(+). It catalyses the reaction 3,3',5'-triiodo-L-thyronine + 3'-phosphoadenylyl sulfate = 3,3',5'-triiodo-L-thyronine sulfate + adenosine 3',5'-bisphosphate + H(+). It carries out the reaction 3,3'-diiodo-L-thyronine + 3'-phosphoadenylyl sulfate = 3,3'-diiodo-L-thyronine sulfate + adenosine 3',5'-bisphosphate + H(+). The enzyme catalyses L-thyroxine + 3'-phosphoadenylyl sulfate = L-thyroxine sulfate + adenosine 3',5'-bisphosphate + H(+). Sulfotransferase that utilizes 3'-phospho-5'-adenylyl sulfate (PAPS) as sulfonate donor to catalyze the sulfate conjugation of phenolic monoamines (neurotransmitters such as dopamine, (R)-adrenaline/epinephrine, (R)-noradrenaline/norepinephrine and serotonin) and phenolic and catechol drugs. Catalyzes the sulfation of T4 (L-thyroxine/3,5,3',5'-tetraiodothyronine), T3 (3,5,3'-triiodothyronine), rT3 (3,3',5'-triiodothyronine) and 3,3'-T2 (3,3'-diiodothyronine), with a substrate preference of 3,3'-T2 &gt; rT3 &gt; T3 &gt; T4. This chain is Sulfotransferase 1A3 (SULT1A3), found in Homo sapiens (Human).